The sequence spans 335 residues: Deoxyhypusine hydroxylase (335 aa).

5 HEAT-like PBS-type repeats span residues leucine 71–aspartate 97, cysteine 104–asparagine 130, leucine 200–aspartate 233, phenylalanine 238–asparagine 264, and valine 271–aspartate 298. 4 residues coordinate Fe cation: histidine 73, glutamate 74, histidine 106, and glutamate 107. Residues histidine 240, glutamate 241, histidine 273, and glutamate 274 each coordinate Fe cation.

Belongs to the deoxyhypusine hydroxylase family. Fe(2+) is required as a cofactor.

It localises to the cytoplasm. The protein localises to the nucleus. It carries out the reaction [eIF5A protein]-deoxyhypusine + AH2 + O2 = [eIF5A protein]-hypusine + A + H2O. It participates in protein modification; eIF5A hypusination. Its function is as follows. Catalyzes the hydroxylation of the N(6)-(4-aminobutyl)-L-lysine intermediate to form hypusine, an essential post-translational modification only found in mature eIF-5A factor. The polypeptide is Deoxyhypusine hydroxylase (lia1) (Aspergillus fumigatus (strain ATCC MYA-4609 / CBS 101355 / FGSC A1100 / Af293) (Neosartorya fumigata)).